Consider the following 674-residue polypeptide: Carcinine transporter (674 aa).

Residues 1 to 53 are Cytoplasmic-facing; the sequence is MSDIEDNDGDEYDELSELRQRHKPESQPSVDEAFDLDDLLPTIGEFGKYQKLL. Residues 54 to 74 traverse the membrane as a helical segment; that stretch reads VFGICLPACIPCGFCAFNQLF. The Extracellular portion of the chain corresponds to 75 to 178; sequence MADTPDDYWC…DLVCDQDIYP (104 aa). N-linked (GlcNAc...) asparagine glycans are attached at residues Asn-122, Asn-141, and Asn-156. A helical membrane pass occupies residues 179–199; the sequence is TIGLAALNTGGPVGVYLFGLL. The Cytoplasmic portion of the chain corresponds to 200–206; that stretch reads NDRGGRR. Residues 207 to 227 form a helical membrane-spanning segment; sequence LSYFVCLATLLAGSLMTSLSK. The Extracellular segment spans residues 228-236; that stretch reads DFWTWAGSR. Residues 237–257 form a helical membrane-spanning segment; it reads VIVGLTIPAVYQIPFIISLEL. The Cytoplasmic segment spans residues 258-264; it reads VGENYRS. Residues 265 to 285 form a helical membrane-spanning segment; the sequence is FVTVMTCTFYTSGIMLLSGVT. Over 286–293 the chain is Extracellular; the sequence is YLERDWVR. A helical membrane pass occupies residues 294–314; that stretch reads LSYITSLPFYAYFLYMFVMPE. Topologically, residues 315-385 are cytoplasmic; sequence SPRWLLMRGR…CRTPNMRLKT (71 aa). The helical transmembrane segment at 386 to 406 threads the bilayer; that stretch reads ILITLSWFANETVYLGLSYYG. Over 407-414 the chain is Extracellular; it reads PALGTNQY. A helical transmembrane segment spans residues 415-435; that stretch reads VSFFLSAVVELPSYLCCWYFM. Over 436–441 the chain is Cytoplasmic; sequence DTWGRR. Residues 442–462 form a helical membrane-spanning segment; the sequence is WPLSLSMILGGVACVITVMLP. Residues 463 to 469 lie on the Extracellular side of the membrane; sequence DDAVDET. The chain crosses the membrane as a helical span at residues 470 to 490; that stretch reads LVLYLVSKALLSASFLIIYPF. Residues 491–500 are Cytoplasmic-facing; it reads AGELYPTQVR. The chain crosses the membrane as a helical span at residues 501–521; sequence GIGIGASSYIGGLGLIGIPFI. Topologically, residues 522–527 are extracellular; it reads TYLGKD. A helical membrane pass occupies residues 528–548; that stretch reads NLKLPLVIMGFLSMLGGMTGL. Over 549-674 the chain is Cytoplasmic; that stretch reads RLPETLHHRL…DGTMQLTHWI (126 aa). The segment covering 614–631 has biased composition (basic and acidic residues); it reads RDSRRVREPAPRIDERTP. Residues 614 to 647 are disordered; that stretch reads RDSRRVREPAPRIDERTPLDTTASGSGRPVHRPS.

The protein belongs to the major facilitator (TC 2.A.1) superfamily. Organic cation transporter (TC 2.A.1.19) family. Expressed in photoreceptor cells.

It localises to the cell membrane. It is found in the cell projection. The protein resides in the axon. Functionally, carcinine transporter which is required for recycling of the neurotransmitter histamine in photoreceptor neurons of the compound eye. Following histamine release from photoreceptors and its uptake by glia where it is converted to carcinine, required for the uptake of carcinine from glia into photoreceptor cells where it can be hydrolyzed by tan to form histamine and beta-alanine. This chain is Carcinine transporter, found in Drosophila melanogaster (Fruit fly).